The chain runs to 246 residues: Ribonuclease 3 (246 aa).

The 134-residue stretch at leucine 10–glycine 143 folds into the RNase III domain. Glutamate 56 lines the Mg(2+) pocket. The active site involves aspartate 60. Mg(2+) is bound by residues asparagine 129 and glutamate 132. Glutamate 132 is an active-site residue. The DRBM domain occupies aspartate 170–glutamate 239.

Belongs to the ribonuclease III family. As to quaternary structure, homodimer. The cofactor is Mg(2+).

The protein localises to the cytoplasm. It carries out the reaction Endonucleolytic cleavage to 5'-phosphomonoester.. Digests double-stranded RNA. Involved in the processing of primary rRNA transcript to yield the immediate precursors to the large and small rRNAs (23S and 16S). Processes some mRNAs, and tRNAs when they are encoded in the rRNA operon. Processes pre-crRNA and tracrRNA of type II CRISPR loci if present in the organism. The polypeptide is Ribonuclease 3 (Magnetococcus marinus (strain ATCC BAA-1437 / JCM 17883 / MC-1)).